The following is a 486-amino-acid chain: Bifunctional protein HldE (486 aa).

The tract at residues 1-331 is ribokinase; it reads MAEHDDGDLI…VDAVKPASGA (331 aa). An ATP-binding site is contributed by 208-211; sequence NRRE. Asp-277 is a catalytic residue. Residues 357-486 are cytidylyltransferase; that stretch reads FTNGCFDLLH…TTATVTRLRS (130 aa).

It in the N-terminal section; belongs to the carbohydrate kinase PfkB family. In the C-terminal section; belongs to the cytidylyltransferase family. As to quaternary structure, homodimer.

The enzyme catalyses D-glycero-beta-D-manno-heptose 7-phosphate + ATP = D-glycero-beta-D-manno-heptose 1,7-bisphosphate + ADP + H(+). It catalyses the reaction D-glycero-beta-D-manno-heptose 1-phosphate + ATP + H(+) = ADP-D-glycero-beta-D-manno-heptose + diphosphate. Its pathway is nucleotide-sugar biosynthesis; ADP-L-glycero-beta-D-manno-heptose biosynthesis; ADP-L-glycero-beta-D-manno-heptose from D-glycero-beta-D-manno-heptose 7-phosphate: step 1/4. It participates in nucleotide-sugar biosynthesis; ADP-L-glycero-beta-D-manno-heptose biosynthesis; ADP-L-glycero-beta-D-manno-heptose from D-glycero-beta-D-manno-heptose 7-phosphate: step 3/4. Its function is as follows. Catalyzes the phosphorylation of D-glycero-D-manno-heptose 7-phosphate at the C-1 position to selectively form D-glycero-beta-D-manno-heptose-1,7-bisphosphate. Catalyzes the ADP transfer from ATP to D-glycero-beta-D-manno-heptose 1-phosphate, yielding ADP-D-glycero-beta-D-manno-heptose. The polypeptide is Bifunctional protein HldE (Acidiphilium cryptum (strain JF-5)).